Reading from the N-terminus, the 1022-residue chain is Histone-lysine N-methyltransferase TRX1 (1022 aa).

The segment at 31–151 is disordered; that stretch reads SSAPCPLPKK…QRQGVHKEAA (121 aa). Pro residues predominate over residues 65–78; the sequence is EGPPPSPATAPPML. Residues 127 to 139 are compositionally biased toward basic and acidic residues; that stretch reads GGAERRGYFSEPK. The PWWP domain occupies 264–327; that stretch reads PGDLVWAKLT…LKQAVPFLNG (64 aa). Basic and acidic residues predominate over residues 367–393; sequence SMEKGSSDANSNKDVHSCDNLSEDKTA. The disordered stretch occupies residues 367-399; sequence SMEKGSSDANSNKDVHSCDNLSEDKTAESGGDY. The region spanning 402–461 is the FYR N-terminal domain; the sequence is MTPIELGNLRVSKLGRIVTDSDYFHNKKHIWPEGYTAFRKFRSVKDPHVVILYKMEVLRN. Positions 465–548 constitute an FYR C-terminal domain; it reads KARPLFRVTS…SCLKYFENAG (84 aa). Residues 553–609 form a Phorbol-ester/DAG-type zinc finger; the sequence is GYRAVHVNWKDLDYCSVCDMDEEYEDNLFLQCDKCRMMVHARCYGELEPLNGVLWLC. 2 consecutive PHD-type zinc fingers follow at residues 564 to 615 and 677 to 744; these read LDYC…CRPE and LLCS…KKHR. Residues 620-744 form an extended PHD domain (ePHD) region; the sequence is SPRCCLCPVT…RLLSYCKKHR (125 aa). The region spanning 861–979 is the SET domain; it reads RRLAFGKSRI…PWEELTYDYR (119 aa). Zn(2+) is bound at residue C943. Y978 is a binding site for S-adenosyl-L-methionine. Residues 985 to 1001 enclose the Post-SET domain; it reads QRLPCYCGFPKCRGVVN. Residues C989, C991, and C996 each contribute to the Zn(2+) site.

This sequence belongs to the class V-like SAM-binding methyltransferase superfamily. Histone-lysine methyltransferase family. TRX/MLL subfamily. Interacts with EHD3. Expressed in leaf blades and panicles.

It localises to the nucleus. The enzyme catalyses L-lysyl(4)-[histone H3] + S-adenosyl-L-methionine = N(6)-methyl-L-lysyl(4)-[histone H3] + S-adenosyl-L-homocysteine + H(+). Functionally, possesses histone H3 methyltransferase activity in vitro. Methylates 'Lys-4' of histone H3. H3 'Lys-4' methylation represents a specific tag for epigenetic transcriptional activation. Functions as a receptor for the lipid messenger phosphatidylinositol 5-phosphate (PI5P), which negatively regulates its transcriptional activation activity. Involved in the regulation of flowering time and floral induction under long day (LD) conditions. Acts as an activator of flowering under LD conditions. May function through binding to EHD3, a repressor of GHD7. The chain is Histone-lysine N-methyltransferase TRX1 from Oryza sativa subsp. japonica (Rice).